Consider the following 409-residue polypeptide: MLMPLGGLLWWWCCCCGWYSCGLCTPAPQMLRHQGLLKCRCRMLFNDLKVFLLRRPPPAPLPMHGDPQLPGVAANNNTLPALGAGGWAGWRGPREAVGRETPPLPPPPPLPPSGDDDWDGPATGPPASLLSSASSDEFCKEKTEDCYSLGSSLDSGMRTPLCRICFQGPEQGELLSPCRCDGSVKCTHQPCLIKWISERGCWSCELCYYKYHVIAISTKNPLQWQAISLTVIEKVQIAAAILGSLFLIASISWLIWSTFSPSAKWQRQDLLFQICYGMYGFMDVVCIGLIIHEGPSVYRIFKRWQAVNQQWKVLNYDKTKDLEDQKSGGRTNLQTSSSAQANLPSAEEEAASPPAREEGPTRAASHPSGPVSQHHCAYTILHILSHLRPHDQRSTQGSGRELVMRVTTV.

Positions M1 to G17 are cleaved as a signal peptide. The interval G92–A133 is disordered. Residues P102–P112 are compositionally biased toward pro residues. An RING-CH-type zinc finger spans residues D154–I214. Zn(2+)-binding residues include C162, C165, C178, C180, H188, C191, C204, and C207. 2 helical membrane passes run L242 to S262 and L271 to I291. 2 disordered regions span residues E323 to S372 and P389 to V409. Polar residues predominate over residues G328–L343.

The protein resides in the golgi apparatus membrane. It carries out the reaction S-ubiquitinyl-[E2 ubiquitin-conjugating enzyme]-L-cysteine + [acceptor protein]-L-lysine = [E2 ubiquitin-conjugating enzyme]-L-cysteine + N(6)-ubiquitinyl-[acceptor protein]-L-lysine.. Its pathway is protein modification; protein ubiquitination. Its function is as follows. E3 ubiquitin-protein ligase that may mediate ubiquitination of MHC-I and CD4, and promote their subsequent endocytosis and sorting to lysosomes via multivesicular bodies. E3 ubiquitin ligases accept ubiquitin from an E2 ubiquitin-conjugating enzyme in the form of a thioester and then directly transfer the ubiquitin to targeted substrates. In Mus musculus (Mouse), this protein is E3 ubiquitin-protein ligase MARCHF4 (Marchf4).